The chain runs to 101 residues: Small ribosomal subunit protein uS14 (101 aa).

The protein belongs to the universal ribosomal protein uS14 family. Part of the 30S ribosomal subunit. Contacts proteins S3 and S10.

In terms of biological role, binds 16S rRNA, required for the assembly of 30S particles and may also be responsible for determining the conformation of the 16S rRNA at the A site. This is Small ribosomal subunit protein uS14 from Chlamydia pneumoniae (Chlamydophila pneumoniae).